Here is a 261-residue protein sequence, read N- to C-terminus: tRNA (guanine-N(1)-)-methyltransferase (261 aa).

S-adenosyl-L-methionine contacts are provided by residues Gly113 and 133 to 138 (IGDYVL).

It belongs to the RNA methyltransferase TrmD family. As to quaternary structure, homodimer.

The protein localises to the cytoplasm. It catalyses the reaction guanosine(37) in tRNA + S-adenosyl-L-methionine = N(1)-methylguanosine(37) in tRNA + S-adenosyl-L-homocysteine + H(+). Its function is as follows. Specifically methylates guanosine-37 in various tRNAs. The protein is tRNA (guanine-N(1)-)-methyltransferase of Xylella fastidiosa (strain M23).